A 484-amino-acid chain; its full sequence is PTS system N-acetylmuramic acid-specific EIIBC component (484 aa).

Positions 1 to 89 (MAKITSNTVS…NQLIDSLTSG (89 aa)) constitute a PTS EIIB type-1 domain. Cys-28 serves as the catalytic Phosphocysteine intermediate; for EIIB activity. The 360-residue stretch at 125–484 (SKFATIFTPL…FFGCKDVDLS (360 aa)) folds into the PTS EIIC type-1 domain. 10 helical membrane passes run 127-147 (FATI…LLGF), 168-188 (LIAY…ILIG), 194-214 (AFGG…LGYN), 228-248 (FFGF…AAII), 266-286 (MILT…LIIM), 310-330 (AAIL…QGFV), 345-365 (LFPI…ALYF), 379-399 (GAII…VTLP), 409-429 (IGGA…LPVG), and 451-471 (IFPG…VGFL).

Its subcellular location is the cell inner membrane. The catalysed reaction is N-acetyl-beta-D-muramate(out) + N(pros)-phospho-L-histidyl-[protein] = N-acetyl-beta-D-muramate 6-phosphate(in) + L-histidyl-[protein]. Functionally, the phosphoenolpyruvate-dependent sugar phosphotransferase system (sugar PTS), a major carbohydrate active transport system, catalyzes the phosphorylation of incoming sugar substrates concomitantly with their translocation across the cell membrane. This system is involved in N-acetylmuramic acid (MurNAc) transport, yielding cytoplasmic MurNAc-6-P. Is also able to take up anhydro-N-acetylmuramic acid (anhMurNAc), but cannot phosphorylate the carbon 6, probably because of the 1,6-anhydro ring. The sequence is that of PTS system N-acetylmuramic acid-specific EIIBC component (murP) from Vibrio parahaemolyticus serotype O3:K6 (strain RIMD 2210633).